Here is a 152-residue protein sequence, read N- to C-terminus: uncharacterized protein (152 aa).

Helical transmembrane passes span 13-33 (LLWF…LLFF), 38-58 (LIVE…SLFM), and 69-89 (WVIF…FFVI).

Its subcellular location is the cell membrane. This is an uncharacterized protein from Mycoplasma pneumoniae (strain ATCC 29342 / M129 / Subtype 1) (Mycoplasmoides pneumoniae).